The following is a 471-amino-acid chain: Argininosuccinate lyase (471 aa).

This sequence belongs to the lyase 1 family. Argininosuccinate lyase subfamily.

Its subcellular location is the cytoplasm. The catalysed reaction is 2-(N(omega)-L-arginino)succinate = fumarate + L-arginine. Its pathway is amino-acid biosynthesis; L-arginine biosynthesis; L-arginine from L-ornithine and carbamoyl phosphate: step 3/3. The sequence is that of Argininosuccinate lyase from Ralstonia nicotianae (strain ATCC BAA-1114 / GMI1000) (Ralstonia solanacearum).